An 894-amino-acid chain; its full sequence is DNA mismatch repair protein MutS (894 aa).

607–614 (GPNMSGKS) provides a ligand contact to ATP.

The protein belongs to the DNA mismatch repair MutS family.

In terms of biological role, this protein is involved in the repair of mismatches in DNA. It is possible that it carries out the mismatch recognition step. This protein has a weak ATPase activity. The polypeptide is DNA mismatch repair protein MutS (Bacillus cereus (strain ZK / E33L)).